Here is a 206-residue protein sequence, read N- to C-terminus: Small ribosomal subunit protein uS4A (206 aa).

The S4 RNA-binding domain occupies 98–164; the sequence is LRLDNVAYKL…EKFKTFAENP (67 aa).

It belongs to the universal ribosomal protein uS4 family. As to quaternary structure, part of the 30S ribosomal subunit. Contacts protein S5. The interaction surface between S4 and S5 is involved in control of translational fidelity.

One of the primary rRNA binding proteins, it binds directly to 16S rRNA where it nucleates assembly of the body of the 30S subunit. In terms of biological role, with S5 and S12 plays an important role in translational accuracy. This Clostridium acetobutylicum (strain ATCC 824 / DSM 792 / JCM 1419 / IAM 19013 / LMG 5710 / NBRC 13948 / NRRL B-527 / VKM B-1787 / 2291 / W) protein is Small ribosomal subunit protein uS4A (rspD1).